The chain runs to 292 residues: Diaminopimelate epimerase (292 aa).

Substrate contacts are provided by asparagine 14 and asparagine 81. The active-site Proton donor is cysteine 90. Residues glycine 91 to asparagine 92, asparagine 166, asparagine 202, and glutamate 220 to arginine 221 each bind substrate. The active-site Proton acceptor is the cysteine 229. Glycine 230 to threonine 231 provides a ligand contact to substrate.

The protein belongs to the diaminopimelate epimerase family. Homodimer.

The protein resides in the cytoplasm. The enzyme catalyses (2S,6S)-2,6-diaminopimelate = meso-2,6-diaminopimelate. It participates in amino-acid biosynthesis; L-lysine biosynthesis via DAP pathway; DL-2,6-diaminopimelate from LL-2,6-diaminopimelate: step 1/1. In terms of biological role, catalyzes the stereoinversion of LL-2,6-diaminopimelate (L,L-DAP) to meso-diaminopimelate (meso-DAP), a precursor of L-lysine and an essential component of the bacterial peptidoglycan. The chain is Diaminopimelate epimerase from Rhodococcus erythropolis (strain PR4 / NBRC 100887).